We begin with the raw amino-acid sequence, 260 residues long: MAKDDSSVRCFQGLLIFGNVIVGMCGIALTAECIFFVSDQHSLYPLLEATDNDDIYGAAWIGMFVGICLFCLSVLGIVGIMKSNRKILLAYFILMFIVYGFEVASCITAATQRDFFTPNLFLKQMLERYQNNSPPNNDDQWKNNGVTKTWDRLMLQDHCCGVNGPSDWQRYTSAFRTANNDADYPWPRQCCVMNSLKEPLNVEACKLGVPGYYHKEGCYELISGPMNRHAWGVAWFGFAILCWTFWVLLGTMFYWSRIEY.

The Cytoplasmic segment spans residues 1–12 (MAKDDSSVRCFQ). The helical transmembrane segment at 13–38 (GLLIFGNVIVGMCGIALTAECIFFVS) threads the bilayer. Topologically, residues 39–60 (DQHSLYPLLEATDNDDIYGAAW) are extracellular. The helical transmembrane segment at 61-81 (IGMFVGICLFCLSVLGIVGIM) threads the bilayer. The Cytoplasmic portion of the chain corresponds to 82-86 (KSNRK). Residues 87-107 (ILLAYFILMFIVYGFEVASCI) form a helical membrane-spanning segment. The Extracellular portion of the chain corresponds to 108-229 (TAATQRDFFT…ELISGPMNRH (122 aa)). Residues 230-250 (AWGVAWFGFAILCWTFWVLLG) form a helical membrane-spanning segment. At 251–260 (TMFYWSRIEY) the chain is on the cytoplasmic side.

It belongs to the tetraspanin (TM4SF) family. As to quaternary structure, heterodimer with uroplakin-3A (UPK3A) or uroplakin-3B (UPK3B).

It localises to the membrane. Component of the asymmetric unit membrane (AUM); a highly specialized biomembrane elaborated by terminally differentiated urothelial cells. This is Uroplakin-1b (UPK1B) from Neovison vison (American mink).